A 319-amino-acid polypeptide reads, in one-letter code: Lipase 1 (319 aa).

Catalysis depends on Ser-189, which acts as the Nucleophile. Ca(2+) is bound by residues Asp-314 and Asp-317.

The enzyme catalyses a triacylglycerol + H2O = a diacylglycerol + a fatty acid + H(+). This Moraxella sp. (strain TA144) protein is Lipase 1 (lip1).